Reading from the N-terminus, the 107-residue chain is Integration host factor subunit alpha (107 aa).

This sequence belongs to the bacterial histone-like protein family. In terms of assembly, heterodimer of an alpha and a beta chain.

Its function is as follows. This protein is one of the two subunits of integration host factor, a specific DNA-binding protein that functions in genetic recombination as well as in transcriptional and translational control. The sequence is that of Integration host factor subunit alpha from Mesorhizobium japonicum (strain LMG 29417 / CECT 9101 / MAFF 303099) (Mesorhizobium loti (strain MAFF 303099)).